The chain runs to 249 residues: 5'-nucleotidase SurE (249 aa).

Positions 8, 9, 39, and 91 each coordinate a divalent metal cation.

Belongs to the SurE nucleotidase family. The cofactor is a divalent metal cation.

Its subcellular location is the cytoplasm. The catalysed reaction is a ribonucleoside 5'-phosphate + H2O = a ribonucleoside + phosphate. Functionally, nucleotidase that shows phosphatase activity on nucleoside 5'-monophosphates. This Pseudomonas putida (strain ATCC 700007 / DSM 6899 / JCM 31910 / BCRC 17059 / LMG 24140 / F1) protein is 5'-nucleotidase SurE.